The chain runs to 214 residues: Molybdenum cofactor guanylyltransferase (214 aa).

Residues 18–20 (LAG), lysine 31, aspartate 77, and aspartate 112 each bind GTP. Aspartate 112 contacts Mg(2+).

It belongs to the MobA family. As to quaternary structure, monomer. It depends on Mg(2+) as a cofactor.

It localises to the cytoplasm. It catalyses the reaction Mo-molybdopterin + GTP + H(+) = Mo-molybdopterin guanine dinucleotide + diphosphate. Its function is as follows. Transfers a GMP moiety from GTP to Mo-molybdopterin (Mo-MPT) cofactor (Moco or molybdenum cofactor) to form Mo-molybdopterin guanine dinucleotide (Mo-MGD) cofactor. This Rhodopseudomonas palustris (strain HaA2) protein is Molybdenum cofactor guanylyltransferase.